A 106-amino-acid polypeptide reads, in one-letter code: Guanylate cyclase activator 2B (106 aa).

A signal peptide spans M1–G21. A propeptide spanning residues V22–A91 is cleaved from the precursor. Disulfide bonds link C62–C75, C95–C103, and C98–C106.

The protein belongs to the guanylin family. As to expression, localized predominantly in intestinal villi and the corticomedullary junction of the kidney.

It is found in the secreted. Its function is as follows. Endogenous activator of intestinal guanylate cyclase. It stimulates this enzyme through the same receptor binding region as the heat-stable enterotoxins. May be a potent physiological regulator of intestinal fluid and electrolyte transport. May be an autocrine/paracrine regulator of intestinal salt and water transport. This is Guanylate cyclase activator 2B (Guca2b) from Mus musculus (Mouse).